The following is a 190-amino-acid chain: Elongation factor P-like protein (190 aa).

This sequence belongs to the elongation factor P family.

This Citrobacter koseri (strain ATCC BAA-895 / CDC 4225-83 / SGSC4696) protein is Elongation factor P-like protein.